Consider the following 219-residue polypeptide: Dehydration-responsive element-binding protein 1F (219 aa).

Residues 1-45 (MDTEDTSSASSSSVSPPSSPGGGHHHRLPPKRRAGRKKFRETRHP) form a disordered region. Positions 7-16 (SSASSSSVSP) are enriched in low complexity. Positions 23–41 (GHHHRLPPKRRAGRKKFRE) are enriched in basic residues. Residues 46–105 (VYRGVRARAGGSRWVCEVREPQAQARIWLGTYPTPEMAARAHDVAAIALRGERGAELNFP) constitute a DNA-binding region (AP2/ERF). The interval 134-161 (RRPPPPLALPEDPQEGTSGGGATATSGR) is disordered.

The protein belongs to the AP2/ERF transcription factor family. ERF subfamily. In terms of tissue distribution, mostly expressed in developing seeds and apices.

It localises to the nucleus. Its function is as follows. Transcriptional activator that binds specifically to the DNA sequence 5'-[AG]CCGAC-3'. Binding to the C-repeat/DRE element mediates high salinity- and dehydration-inducible transcription. The sequence is that of Dehydration-responsive element-binding protein 1F (DREB1F) from Oryza sativa subsp. indica (Rice).